The sequence spans 197 residues: RNA pyrophosphohydrolase (197 aa).

One can recognise a Nudix hydrolase domain in the interval 6 to 150 (GYRPNVGIVI…KRDVYRKVMR (145 aa)). Positions 38–59 (GGINEGENIETAMYRELYEEVG) match the Nudix box motif.

This sequence belongs to the Nudix hydrolase family. RppH subfamily. It depends on a divalent metal cation as a cofactor.

Its function is as follows. Accelerates the degradation of transcripts by removing pyrophosphate from the 5'-end of triphosphorylated RNA, leading to a more labile monophosphorylated state that can stimulate subsequent ribonuclease cleavage. This chain is RNA pyrophosphohydrolase, found in Haemophilus ducreyi (strain 35000HP / ATCC 700724).